Consider the following 162-residue polypeptide: NADH-quinone oxidoreductase subunit C (162 aa).

It belongs to the complex I 30 kDa subunit family. As to quaternary structure, NDH-1 is composed of 14 different subunits. Subunits NuoB, C, D, E, F, and G constitute the peripheral sector of the complex.

The protein resides in the cell inner membrane. The enzyme catalyses a quinone + NADH + 5 H(+)(in) = a quinol + NAD(+) + 4 H(+)(out). Its function is as follows. NDH-1 shuttles electrons from NADH, via FMN and iron-sulfur (Fe-S) centers, to quinones in the respiratory chain. The immediate electron acceptor for the enzyme in this species is believed to be ubiquinone. Couples the redox reaction to proton translocation (for every two electrons transferred, four hydrogen ions are translocated across the cytoplasmic membrane), and thus conserves the redox energy in a proton gradient. In Geobacter sulfurreducens (strain ATCC 51573 / DSM 12127 / PCA), this protein is NADH-quinone oxidoreductase subunit C.